Here is a 322-residue protein sequence, read N- to C-terminus: ATP-dependent 6-phosphofructokinase (322 aa).

Residues Gly-12, 73 to 74 (RF), and 103 to 106 (GDGT) each bind ATP. Asp-104 is a binding site for Mg(2+). Residue 126–128 (TID) coordinates substrate. The active-site Proton acceptor is Asp-128. Arg-155 is a binding site for ADP. Substrate is bound by residues Arg-163 and 170–172 (MGR). Residues 186 to 188 (GSE), Lys-212, and 214 to 216 (KPS) each bind ADP. Substrate-binding positions include Glu-223, Arg-245, and 251-254 (HTQR).

The protein belongs to the phosphofructokinase type A (PFKA) family. ATP-dependent PFK group I subfamily. Prokaryotic clade 'B1' sub-subfamily. As to quaternary structure, homotetramer. It depends on Mg(2+) as a cofactor.

It is found in the cytoplasm. The catalysed reaction is beta-D-fructose 6-phosphate + ATP = beta-D-fructose 1,6-bisphosphate + ADP + H(+). The protein operates within carbohydrate degradation; glycolysis; D-glyceraldehyde 3-phosphate and glycerone phosphate from D-glucose: step 3/4. Its activity is regulated as follows. Allosterically activated by ADP and other diphosphonucleosides, and allosterically inhibited by phosphoenolpyruvate. Its function is as follows. Catalyzes the phosphorylation of D-fructose 6-phosphate to fructose 1,6-bisphosphate by ATP, the first committing step of glycolysis. The protein is ATP-dependent 6-phosphofructokinase of Mesomycoplasma hyopneumoniae (strain 7448) (Mycoplasma hyopneumoniae).